The chain runs to 407 residues: Carbamoyl phosphate synthase small chain (407 aa).

The segment at 1 to 205 is CPSase; the sequence is MTETTPKTAP…LQDGYGEQDA (205 aa). L-glutamine is bound by residues Ser-60, Gly-257, and Gly-259. In terms of domain architecture, Glutamine amidotransferase type-1 spans 209–397; it reads HVVALDFGVK…INLIRERKGQ (189 aa). Cys-286 (nucleophile) is an active-site residue. The L-glutamine site is built by Leu-287, Gln-290, Asn-328, Gly-330, and Phe-331. Catalysis depends on residues His-370 and Glu-372.

Belongs to the CarA family. Composed of two chains; the small (or glutamine) chain promotes the hydrolysis of glutamine to ammonia, which is used by the large (or ammonia) chain to synthesize carbamoyl phosphate. Tetramer of heterodimers (alpha,beta)4.

It carries out the reaction hydrogencarbonate + L-glutamine + 2 ATP + H2O = carbamoyl phosphate + L-glutamate + 2 ADP + phosphate + 2 H(+). The enzyme catalyses L-glutamine + H2O = L-glutamate + NH4(+). It participates in amino-acid biosynthesis; L-arginine biosynthesis; carbamoyl phosphate from bicarbonate: step 1/1. Its pathway is pyrimidine metabolism; UMP biosynthesis via de novo pathway; (S)-dihydroorotate from bicarbonate: step 1/3. Functionally, small subunit of the glutamine-dependent carbamoyl phosphate synthetase (CPSase). CPSase catalyzes the formation of carbamoyl phosphate from the ammonia moiety of glutamine, carbonate, and phosphate donated by ATP, constituting the first step of 2 biosynthetic pathways, one leading to arginine and/or urea and the other to pyrimidine nucleotides. The small subunit (glutamine amidotransferase) binds and cleaves glutamine to supply the large subunit with the substrate ammonia. The polypeptide is Carbamoyl phosphate synthase small chain (Brucella abortus (strain S19)).